A 95-amino-acid polypeptide reads, in one-letter code: Small ribosomal subunit protein bS16 (95 aa).

This sequence belongs to the bacterial ribosomal protein bS16 family.

The sequence is that of Small ribosomal subunit protein bS16 from Streptococcus pneumoniae (strain CGSP14).